Consider the following 819-residue polypeptide: Eukaryotic translation initiation factor 3 subunit C (819 aa).

The tract at residues Met1 to Lys106 is disordered. Acidic residues-rich tracts occupy residues Gly17 to Asp41 and Asp47 to Asp59. The PCI domain maps to Phe620–Glu795.

The protein belongs to the eIF-3 subunit C family. In terms of assembly, component of the eukaryotic translation initiation factor 3 (eIF-3) complex.

The protein resides in the cytoplasm. Its function is as follows. Component of the eukaryotic translation initiation factor 3 (eIF-3) complex, which is involved in protein synthesis of a specialized repertoire of mRNAs and, together with other initiation factors, stimulates binding of mRNA and methionyl-tRNAi to the 40S ribosome. The eIF-3 complex specifically targets and initiates translation of a subset of mRNAs involved in cell proliferation. This is Eukaryotic translation initiation factor 3 subunit C from Kluyveromyces lactis (strain ATCC 8585 / CBS 2359 / DSM 70799 / NBRC 1267 / NRRL Y-1140 / WM37) (Yeast).